The chain runs to 788 residues: Cell division cycle protein 27 homolog (788 aa).

The segment at 198–436 is disordered; it reads YLDSPASSLK…PLPSVASSLN (239 aa). Residues 217 to 229 are compositionally biased toward low complexity; that stretch reads GPSSSSAASTAEP. Composition is skewed to polar residues over residues 241–273, 293–303, and 319–360; these read RGTI…SRIN, SSVTGSRSSLF, and NRAN…NPVR. The segment covering 366 to 378 has biased composition (low complexity); it reads ADAAAAANKTAKT. The span at 391 to 414 shows a compositional bias: polar residues; the sequence is VSRNSNLARSLSGSTNSVASTASE. 5 TPR repeats span residues 561-594, 596-628, 629-662, 664-696, and 731-764; these read PQSW…DKRF, YAYT…SPRD, YRAW…NPTN, AMLC…NPLD, and AFIF…DPRG.

Belongs to the APC3/CDC27 family. As to quaternary structure, the APC/C complex is probably composed of at least 12 subunits: apc-2, apc-10, apc-11, cdc-26, emb-1, emb-27, emb-30, mat-1, mat-2, mat-3, such-1 and gfi-3. As to expression, expressed in the ventral nerve cord.

It localises to the nucleus. The protein operates within protein modification; protein ubiquitination. Functionally, probable component of the anaphase promoting complex/cyclosome (APC/C), a cell cycle-regulated E3 ubiquitin ligase that controls progression through mitosis and the G1 phase of the cell cycle. The APC/C complex acts by mediating ubiquitination and subsequent degradation of target proteins. Developmental role in early embryogenesis and the metaphase to anaphase transition in oocyte and spermatocyte meiosis and mitosis in germ cells. Required for embryonic anterior-posterior axis formation. Plays a role in regulating the abundance of glr-1 receptors in postmitotic neurons, which may in turn control animal locomotion. This chain is Cell division cycle protein 27 homolog, found in Caenorhabditis elegans.